The primary structure comprises 195 residues: MHAITNSGWVEVITGSMFSGKTEELLRRLRRAEIAGQDVAAVTPAVDDRYGEATLGSHAGRSWAATVVEPTAEGVASIPTLLNGEQVVAIDEANFFPAELVDVCQELAADGRRVVLSGTDQTFRGEPFEPVPQLMAIAEYVDKMRAICMQCGEPATRNQRLIEGEPAHYDDPTVMVGAEETYEARCRNCHVVRRE.

Residues glycine 15–threonine 22 and aspartate 91–asparagine 94 each bind ATP. Catalysis depends on glutamate 92, which acts as the Proton acceptor. 4 residues coordinate Zn(2+): cysteine 148, cysteine 151, cysteine 186, and cysteine 189.

This sequence belongs to the thymidine kinase family. Homotetramer.

Its subcellular location is the cytoplasm. The catalysed reaction is thymidine + ATP = dTMP + ADP + H(+). This Halobacterium salinarum (strain ATCC 29341 / DSM 671 / R1) protein is Thymidine kinase.